Here is a 228-residue protein sequence, read N- to C-terminus: Protein GrpE (228 aa).

Disordered regions lie at residues 1–31 and 209–228; these read MADEKNKSQNPDLEQRDINNPRDREALNRAA and GVSKGGPKATADNGASEGNG.

Belongs to the GrpE family. Homodimer.

The protein localises to the cytoplasm. Functionally, participates actively in the response to hyperosmotic and heat shock by preventing the aggregation of stress-denatured proteins, in association with DnaK and GrpE. It is the nucleotide exchange factor for DnaK and may function as a thermosensor. Unfolded proteins bind initially to DnaJ; upon interaction with the DnaJ-bound protein, DnaK hydrolyzes its bound ATP, resulting in the formation of a stable complex. GrpE releases ADP from DnaK; ATP binding to DnaK triggers the release of the substrate protein, thus completing the reaction cycle. Several rounds of ATP-dependent interactions between DnaJ, DnaK and GrpE are required for fully efficient folding. This chain is Protein GrpE, found in Brucella anthropi (strain ATCC 49188 / DSM 6882 / CCUG 24695 / JCM 21032 / LMG 3331 / NBRC 15819 / NCTC 12168 / Alc 37) (Ochrobactrum anthropi).